Reading from the N-terminus, the 100-residue chain is Aspartyl/glutamyl-tRNA(Asn/Gln) amidotransferase subunit C (100 aa).

It belongs to the GatC family. Heterotrimer of A, B and C subunits.

The enzyme catalyses L-glutamyl-tRNA(Gln) + L-glutamine + ATP + H2O = L-glutaminyl-tRNA(Gln) + L-glutamate + ADP + phosphate + H(+). It carries out the reaction L-aspartyl-tRNA(Asn) + L-glutamine + ATP + H2O = L-asparaginyl-tRNA(Asn) + L-glutamate + ADP + phosphate + 2 H(+). In terms of biological role, allows the formation of correctly charged Asn-tRNA(Asn) or Gln-tRNA(Gln) through the transamidation of misacylated Asp-tRNA(Asn) or Glu-tRNA(Gln) in organisms which lack either or both of asparaginyl-tRNA or glutaminyl-tRNA synthetases. The reaction takes place in the presence of glutamine and ATP through an activated phospho-Asp-tRNA(Asn) or phospho-Glu-tRNA(Gln). The protein is Aspartyl/glutamyl-tRNA(Asn/Gln) amidotransferase subunit C of Dictyoglomus turgidum (strain DSM 6724 / Z-1310).